We begin with the raw amino-acid sequence, 427 residues long: Histidine--tRNA ligase (427 aa).

This sequence belongs to the class-II aminoacyl-tRNA synthetase family. As to quaternary structure, homodimer.

It localises to the cytoplasm. The enzyme catalyses tRNA(His) + L-histidine + ATP = L-histidyl-tRNA(His) + AMP + diphosphate + H(+). This chain is Histidine--tRNA ligase, found in Chloroherpeton thalassium (strain ATCC 35110 / GB-78).